A 708-amino-acid chain; its full sequence is Lactotransferrin (708 aa).

Residues 1–19 form the signal peptide; the sequence is MKLFVPALLSLGALGLCLA. Transferrin-like domains follow at residues 25-352 and 364-693; these read VRWC…NLRE and VVWC…NLKK. Cystine bridges form between cysteine 28–cysteine 64 and cysteine 38–cysteine 55. Aspartate 79 is a binding site for Fe cation. The active site involves lysine 92. Fe cation is bound at residue tyrosine 111. Disulfide bonds link cysteine 134/cysteine 217, cysteine 176/cysteine 192, cysteine 179/cysteine 202, cysteine 189/cysteine 200, and cysteine 250/cysteine 264. Threonine 136, arginine 140, alanine 142, and glycine 143 together coordinate hydrogencarbonate. A Fe cation-binding site is contributed by tyrosine 211. Asparagine 252 is a glycosylation site (N-linked (GlcNAc...) (high mannose) asparagine). Fe cation is bound at residue histidine 272. Catalysis depends on serine 278, which acts as the Nucleophile. A glycan (N-linked (GlcNAc...) (hybrid) asparagine) is linked at asparagine 300. 2 cysteine pairs are disulfide-bonded: cysteine 367–cysteine 399 and cysteine 377–cysteine 390. Aspartate 414 and tyrosine 452 together coordinate Fe cation. Disulfide bonds link cysteine 424/cysteine 703, cysteine 444/cysteine 666, cysteine 476/cysteine 551, cysteine 500/cysteine 694, cysteine 510/cysteine 524, cysteine 521/cysteine 534, cysteine 592/cysteine 606, and cysteine 644/cysteine 649. 4 residues coordinate hydrogencarbonate: threonine 478, arginine 482, alanine 484, and glycine 485. Residue asparagine 495 is glycosylated (N-linked (GlcNAc...) (complex) asparagine; alternate). The N-linked (GlcNAc...) (high mannose) asparagine; alternate glycan is linked to asparagine 495. N-linked (GlcNAc...) (hybrid) asparagine; alternate glycosylation is present at asparagine 495. Tyrosine 545 is a Fe cation binding site. A glycan (N-linked (GlcNAc...) (high mannose) asparagine) is linked at asparagine 564. Histidine 614 serves as a coordination point for Fe cation.

It belongs to the transferrin family. In terms of assembly, monomer. Found in a complex with LTF, CLU, EPPIN and SEMG1. Found in a complex with MPO and LTF; interacts directly with CP, allows Fe(3+) incorporation into LTF and activation of CP ferroxidase activity. Post-translationally, poly-N-acetyllactosaminic carbohydrate moiety seems to be needed for TLR4 activation.

The protein resides in the secreted. It localises to the cytoplasmic granule. In terms of biological role, transferrins are iron binding transport proteins which can bind two Fe(3+) ions in association with the binding of an anion, usually bicarbonate. Functionally, major iron-binding and multifunctional protein found in exocrine fluids such as breast milk and mucosal secretions. Has antimicrobial activity, which depends on the extracellular cation concentration. Antimicrobial properties include bacteriostasis, which is related to its ability to sequester free iron and thus inhibit microbial growth, as well as direct bactericidal properties leading to the release of lipopolysaccharides from the bacterial outer membrane. Can also prevent bacterial biofilm development in P.aeruginosa infection. Has weak antifungal activity against C.albicans. Has anabolic, differentiating and anti-apoptotic effects on osteoblasts and can also inhibit osteoclastogenesis, possibly playing a role in the regulation of bone growth. Promotes binding of species C adenoviruses to epithelial cells, promoting adenovirus infection. Can inhibit papillomavirus infections. Stimulates the TLR4 signaling pathway leading to NF-kappa-B activation and subsequent pro-inflammatory cytokine production while also interfering with the lipopolysaccharide (LPS)-stimulated TLR4 signaling. Inhibits neutrophil granulocyte migration to sites of apoptosis, when secreted by apoptotic cells. Stimulates VEGFA-mediated endothelial cell migration and proliferation. Binds heparin, chondroitin sulfate and possibly other glycosaminoglycans (GAGs). Also binds specifically to pneumococcal surface protein A (PspA), the lipid A portion of bacterial lipopolysaccharide (LPS), lysozyme and DNA. Lactoferricin binds to the bacterial surface and is crucial for the bactericidal functions. Has some antiviral activity against papillomavirus infection. N-terminal region shows strong antifungal activity against C.albicans. Contains two BBXB heparin-binding consensus sequences that appear to form the predominate functional GAG-binding site. Its function is as follows. The lactotransferrin transferrin-like domain 1 functions as a serine protease of the peptidase S60 family that cuts arginine rich regions. This function contributes to the antimicrobial activity. Shows a preferential cleavage at -Arg-Ser-Arg-Arg-|- and -Arg-Arg-Ser-Arg-|-, and of Z-Phe-Arg-|-aminomethylcoumarin sites. This chain is Lactotransferrin (LTF), found in Bubalus bubalis (Domestic water buffalo).